The primary structure comprises 991 residues: Pentatricopeptide repeat-containing protein At1g73710 (991 aa).

Disordered regions lie at residues 1 to 27 and 61 to 81; these read MLQP…HHHH and SSSS…RKRK. The segment covering 15–27 has biased composition (basic residues); that stretch reads VRHHHHHHHHHHH. Over residues 61–73 the composition is skewed to low complexity; sequence SSSSVSPPRCSKP. PPR repeat units follow at residues 144 to 178, 179 to 213, 214 to 248, 304 to 338, 339 to 373, 374 to 408, 409 to 443, 444 to 474, 478 to 513, 514 to 548, 549 to 583, 584 to 618, 619 to 653, 654 to 688, 689 to 719, 723 to 757, 758 to 792, 862 to 896, and 897 to 931; these read NVIH…GVLP, TNNT…MHFP, DEVT…KVDL, LTST…GVPI, DTVT…GISP, DTKT…GLFP, DTVT…SIRI, DEHS…FQLD, SSTT…GQRN, DVLE…GTWP, DECT…GCKP, GCKT…GVKP, NEVV…GVQS, NHIV…EGGP, DVAA…LREK, DVIS…GLLS, DCTS…RKLL, EHFA…GLEP, and DIVT…ELEP. The span at 965–974 shows a compositional bias: basic and acidic residues; that stretch reads AERECSSRSG. The segment at 965–991 is disordered; that stretch reads AERECSSRSGEEEEDDEEENSEEDEAF. Residues 975-991 show a composition bias toward acidic residues; sequence EEEEDDEEENSEEDEAF.

The protein belongs to the PPR family. P subfamily.

The sequence is that of Pentatricopeptide repeat-containing protein At1g73710 from Arabidopsis thaliana (Mouse-ear cress).